The primary structure comprises 128 residues: Protein ApaG (128 aa).

One can recognise an ApaG domain in the interval 1-123 (MTSSPDITVS…FRLDIAPESG (123 aa)).

This chain is Protein ApaG, found in Deinococcus radiodurans (strain ATCC 13939 / DSM 20539 / JCM 16871 / CCUG 27074 / LMG 4051 / NBRC 15346 / NCIMB 9279 / VKM B-1422 / R1).